We begin with the raw amino-acid sequence, 200 residues long: Sec-independent protein translocase protein TatB (200 aa).

A helical transmembrane segment spans residues 2 to 22 (LPDIGGTELLIIAAVALIVVG). Positions 160–200 (KAPRKRASQKQEITVEAPKAVRAPRKRASKAGDSTASDIVS) are disordered. Residues 191–200 (GDSTASDIVS) show a composition bias toward polar residues.

Belongs to the TatB family. As to quaternary structure, the Tat system comprises two distinct complexes: a TatABC complex, containing multiple copies of TatA, TatB and TatC subunits, and a separate TatA complex, containing only TatA subunits. Substrates initially bind to the TatABC complex, which probably triggers association of the separate TatA complex to form the active translocon.

The protein resides in the cell inner membrane. Functionally, part of the twin-arginine translocation (Tat) system that transports large folded proteins containing a characteristic twin-arginine motif in their signal peptide across membranes. Together with TatC, TatB is part of a receptor directly interacting with Tat signal peptides. TatB may form an oligomeric binding site that transiently accommodates folded Tat precursor proteins before their translocation. The chain is Sec-independent protein translocase protein TatB from Caulobacter vibrioides (strain ATCC 19089 / CIP 103742 / CB 15) (Caulobacter crescentus).